The sequence spans 344 residues: Phosphoribosylformylglycinamidine cyclo-ligase (344 aa).

It belongs to the AIR synthase family.

The protein localises to the cytoplasm. The enzyme catalyses 2-formamido-N(1)-(5-O-phospho-beta-D-ribosyl)acetamidine + ATP = 5-amino-1-(5-phospho-beta-D-ribosyl)imidazole + ADP + phosphate + H(+). The protein operates within purine metabolism; IMP biosynthesis via de novo pathway; 5-amino-1-(5-phospho-D-ribosyl)imidazole from N(2)-formyl-N(1)-(5-phospho-D-ribosyl)glycinamide: step 2/2. The chain is Phosphoribosylformylglycinamidine cyclo-ligase from Neisseria meningitidis serogroup B (strain ATCC BAA-335 / MC58).